A 689-amino-acid polypeptide reads, in one-letter code: Probable serine/threonine-protein kinase abkC (689 aa).

The interval 42-79 (NNSGNENYKNFNYNYKNKNNYNNNNNNNNSNSSSNNNG) is disordered. A Protein kinase domain is found at 257 to 689 (WFDEEPMASG…NNKNNNEKNK (433 aa)). ATP-binding positions include 263–271 (MASGSVAQV) and lysine 285. Catalysis depends on aspartate 417, which acts as the Proton acceptor. The tract at residues 652 to 689 (KQLNNDNNNNNNNNNNNKNNNDNNNKNNNNKNNNEKNK) is disordered. A compositionally biased stretch (low complexity) spans 655-683 (NNDNNNNNNNNNNNKNNNDNNNKNNNNKN).

The protein belongs to the protein kinase superfamily. ADCK protein kinase family.

In Dictyostelium discoideum (Social amoeba), this protein is Probable serine/threonine-protein kinase abkC (abkC).